The sequence spans 310 residues: Olfactory receptor 5P55 (310 aa).

Residues 1–25 (METQNHTTVTEFILLGLTESSTLRV) are Extracellular-facing. N5 carries N-linked (GlcNAc...) asparagine glycosylation. The helical transmembrane segment at 26–46 (ILFMVFLGIYTVTLVGNFSII) threads the bilayer. Residues 47–54 (SLIRSCPQ) are Cytoplasmic-facing. The chain crosses the membrane as a helical span at residues 55–75 (LHTPMYLFLSHLAFVDIGFST). Residues 76-99 (SITPTMFKGFLGNRLVLSVAACIA) are Extracellular-facing. The cysteines at positions 97 and 189 are disulfide-linked. The chain crosses the membrane as a helical span at residues 100–120 (QFCITVTFGTVECFLLAVMAY). The Cytoplasmic segment spans residues 121–133 (DRYVAICSPLLYS). The helical transmembrane segment at 134 to 154 (THMSPRICFLLVGASYVGGCV) threads the bilayer. Residues 155-196 (NSGAFTSCLSILSFCGPNQIDHFFCDFPAVLKLSCSDVSIIG) lie on the Extracellular side of the membrane. The helical transmembrane segment at 197–217 (IIPSISAGSIIVITVFVIAVS) threads the bilayer. Residues 218 to 237 (YAYILITILKMRSTEGRQKA) are Cytoplasmic-facing. The chain crosses the membrane as a helical span at residues 238-258 (FSTCTSHLTAVTLYYGTITFI). At 259–271 (YVMPKSNYSTAQN) the chain is on the extracellular side. N265 is a glycosylation site (N-linked (GlcNAc...) asparagine). The chain crosses the membrane as a helical span at residues 272-292 (KILSVFYTVVIPMLNPLIYSL). The Cytoplasmic segment spans residues 293 to 310 (RNRDVKEALRKAIIRIFP).

This sequence belongs to the G-protein coupled receptor 1 family.

The protein localises to the cell membrane. Potential odorant receptor. This Mus musculus (Mouse) protein is Olfactory receptor 5P55.